We begin with the raw amino-acid sequence, 241 residues long: Uridylate kinase (241 aa).

Residue 15-18 (KLSG) coordinates ATP. The segment at 23–28 (GAEGFG) is involved in allosteric activation by GTP. Residue G57 participates in UMP binding. The ATP site is built by G58 and R62. UMP-binding positions include D77 and 138-145 (TGNPFFTT). Residues T165, Y171, and D174 each coordinate ATP.

It belongs to the UMP kinase family. In terms of assembly, homohexamer.

The protein localises to the cytoplasm. The catalysed reaction is UMP + ATP = UDP + ADP. Its pathway is pyrimidine metabolism; CTP biosynthesis via de novo pathway; UDP from UMP (UMPK route): step 1/1. With respect to regulation, allosterically activated by GTP. Inhibited by UTP. Its function is as follows. Catalyzes the reversible phosphorylation of UMP to UDP. The protein is Uridylate kinase of Serratia proteamaculans (strain 568).